We begin with the raw amino-acid sequence, 463 residues long: Cysteine--tRNA ligase (463 aa).

Residue C29 participates in Zn(2+) binding. Positions 31 to 41 (PTVYDFAHIGN) match the 'HIGH' region motif. Zn(2+) is bound by residues C227, H252, and E256. A 'KMSKS' region motif is present at residues 285–289 (KMSKS). ATP is bound at residue K288.

Belongs to the class-I aminoacyl-tRNA synthetase family. In terms of assembly, monomer. It depends on Zn(2+) as a cofactor.

It localises to the cytoplasm. It carries out the reaction tRNA(Cys) + L-cysteine + ATP = L-cysteinyl-tRNA(Cys) + AMP + diphosphate. The protein is Cysteine--tRNA ligase of Rhodopseudomonas palustris (strain BisB5).